The following is a 309-amino-acid chain: MGNVWSLTSQMFPPKPKWTVDDMPDLTGKVVIVTGGNTGCGKESVRVLLLHGAKVYLAARSEGKAKEAIEDLKKETGHEAIFLPLDLADLVSVRRGAEEFLSKEKQLHILFNNAGVMLSPMEMLTKQGYDLQFGTNVIGHFHFTKLVLPALLAAATPTEKARVITTSSSANYMGTLNFDLWADGPARNKKAPGDMYVQSKHGNVVFAVELARRYGAQNIISHSLNPGSIRTDLQRHLSPFANKMQDIFLFPVSMGALTQLWAGTSPEAGQMNGEFMIPWARLGKARKETGDPEVGKKLWEWLEAQCKDY.

NADP(+) contacts are provided by Lys-64, Asp-86, Asn-113, and Lys-145. Catalysis depends on Ser-167, which acts as the Proton donor. NADP(+) is bound by residues Tyr-196 and Lys-200. The active-site Proton acceptor is the Tyr-196. The active-site Lowers pKa of active site Tyr is Lys-200.

Belongs to the short-chain dehydrogenases/reductases (SDR) family.

It participates in secondary metabolite biosynthesis. Short-chain dehydrogenase/reductase, part of the gene cluster that mediates the biosynthesis of melleolides, a range of antifungal and phytotoxic polyketide derivatives composed of an orsellinic acid (OA) moiety esterified to various sesquiterpene alcohols. The first step in melleolides biosynthesis is performed by the delta(6)-protoilludene synthase PRO1 which catalyzes the cyclization of farnesyl diphosphate to protoilludene. The orsellinic acid synthase armB produces OA by condensing acetyl-CoA with 3 malonyl-CoA units in a three-round chain elongation reaction folowed by a C2-C7 ring closure. ArmB further catalyzes the trans-esterification of OA to the various sesquiterpene alcohols resulting from the hydroxylation of protoilludene. The melleolides cluster also includes 5 cytochrome P450 monooxygenases, 4 NAD(+)-dependent oxidoreductases, one flavin-dependent oxidoreductase, and one O-methyltransferase. The cytochrome P450 monooxygenases may be involved in protoilludene hydroxylation to elaborate melleolides with multiple alcohol groups, such as melleolide D, which carries alcohol functionalities at C-4, C-5, C-10, and C-13. The role of the NAD(+)-dependent enzymes remains unknown. Numerous melleolides, including arnamial, show 5'-O-methylation of the aromatic moiety which may be catalyzed by the methyltransferase encoded in the cluster. The flavin-dependent oxidoreductase might represent the dehydrogenase yielding the aldehyde in position 1 of arnamial and other melleolides. Finally, several halogenase localized outside of the cluster, are able to catalyze the transfer of a single chlorine atom to the melleolide backbone, resulting in a 6'-chloromelleolide product. This Armillaria gallica (Bulbous honey fungus) protein is Short-chain dehydrogenase/reductase ARMGADRAFT_1048226.